The sequence spans 282 residues: Ribosomal RNA small subunit methyltransferase A (282 aa).

The S-adenosyl-L-methionine site is built by N28, L30, G55, E77, D103, and N122.

It belongs to the class I-like SAM-binding methyltransferase superfamily. rRNA adenine N(6)-methyltransferase family. RsmA subfamily.

The protein localises to the cytoplasm. It carries out the reaction adenosine(1518)/adenosine(1519) in 16S rRNA + 4 S-adenosyl-L-methionine = N(6)-dimethyladenosine(1518)/N(6)-dimethyladenosine(1519) in 16S rRNA + 4 S-adenosyl-L-homocysteine + 4 H(+). Its function is as follows. Specifically dimethylates two adjacent adenosines (A1518 and A1519) in the loop of a conserved hairpin near the 3'-end of 16S rRNA in the 30S particle. May play a critical role in biogenesis of 30S subunits. This chain is Ribosomal RNA small subunit methyltransferase A, found in Paracoccus denitrificans (strain Pd 1222).